A 312-amino-acid chain; its full sequence is Putative endo-1,4-beta-xylanase (312 aa).

Residues 1–301 form the GH10 domain; that stretch reads MKQQYLLDYE…KPCFYSFLQA (301 aa). Residue Glu-104 is the Proton donor of the active site. Residue Glu-216 is the Nucleophile of the active site.

This sequence belongs to the glycosyl hydrolase 10 (cellulase F) family.

The enzyme catalyses Endohydrolysis of (1-&gt;4)-beta-D-xylosidic linkages in xylans.. The protein operates within glycan degradation; xylan degradation. Functionally, could be a xylanase. This Caldicellulosiruptor saccharolyticus (Caldocellum saccharolyticum) protein is Putative endo-1,4-beta-xylanase.